Reading from the N-terminus, the 266-residue chain is GTP cyclohydrolase III (266 aa).

It belongs to the archaeal-type GTP cyclohydrolase family.

The catalysed reaction is GTP + 3 H2O = 2-amino-5-formylamino-6-(5-phospho-D-ribosylamino)pyrimidin-4(3H)-one + 2 phosphate + 2 H(+). In terms of biological role, catalyzes the formation of 2-amino-5-formylamino-6-ribofuranosylamino-4(3H)-pyrimidinone ribonucleotide monophosphate and inorganic phosphate from GTP. Also has an independent pyrophosphate phosphohydrolase activity. The chain is GTP cyclohydrolase III from Methanococcus vannielii (strain ATCC 35089 / DSM 1224 / JCM 13029 / OCM 148 / SB).